The following is a 789-amino-acid chain: Disintegrin and metalloproteinase domain-containing protein 1 (789 aa).

Residues 1-68 (MSVAASASRS…LLIFLPSTLC (68 aa)) form the signal peptide. A Peptidase M12B domain is found at 238–432 (KYVEMFVVVN…HRGACLLDRP (195 aa)). Asn259 is a glycosylation site (N-linked (GlcNAc...) asparagine). 4 cysteine pairs are disulfide-bonded: Cys348–Cys427, Cys388–Cys411, Cys390–Cys396, and Cys497–Cys517. His373 lines the Zn(2+) pocket. The active site involves Glu374. Residues His377 and His383 each contribute to the Zn(2+) site. Asn410 carries N-linked (GlcNAc...) asparagine glycosylation. One can recognise a Disintegrin domain in the interval 441–525 (DAHCGNGVVE…ECPANSYMQD (85 aa)). Asn633 carries an N-linked (GlcNAc...) asparagine glycan. The region spanning 666 to 700 (LQYDCHPQEMCHGNGVCNNFKHCHCDAGFSPPDCS) is the EGF-like domain. 3 cysteine pairs are disulfide-bonded: Cys670–Cys682, Cys676–Cys688, and Cys690–Cys699. Asn720 is a glycosylation site (N-linked (GlcNAc...) asparagine). The helical transmembrane segment at 743–763 (VVVLVVPIFLIVLLCCLMLIA) threads the bilayer. Residues 764–789 (YLWSEVQEAVSPGSSSTTSSSESESD) are Cytoplasmic-facing.

Heterodimer with ADAM2/fertilin subunit beta.

It is found in the membrane. In terms of biological role, may be involved in sperm-egg fusion. The polypeptide is Disintegrin and metalloproteinase domain-containing protein 1 (Adam1) (Rattus norvegicus (Rat)).